The following is a 37-amino-acid chain: Antifungal protein S (37 aa).

Belongs to the thaumatin family.

In terms of biological role, has antifungal activity. Inhibits the growth of Trichoderma viridae and Candida albicans. This chain is Antifungal protein S, found in Hordeum vulgare (Barley).